We begin with the raw amino-acid sequence, 126 residues long: Spermidine export protein MdtJ (126 aa).

4 helical membrane passes run 1–21 (MIYW…TLSM), 30–50 (ITGH…LSLA), 54–74 (VALG…ITLF), and 81–101 (EPFS…IVML).

It belongs to the drug/metabolite transporter (DMT) superfamily. Small multidrug resistance (SMR) (TC 2.A.7.1) family. MdtJ subfamily. As to quaternary structure, forms a complex with MdtI.

Its subcellular location is the cell inner membrane. Catalyzes the excretion of spermidine. The protein is Spermidine export protein MdtJ of Sodalis glossinidius (strain morsitans).